Reading from the N-terminus, the 205-residue chain is Protein phosphatase inhibitor 2 (205 aa).

The interval Met1–Ser44 is disordered. The residue at position 2 (Ala2) is an N-acetylalanine. Positions Lys12–Asn17 are required for binding PPP1CC. Residues Thr19–Ala29 are compositionally biased toward low complexity. The span at Gln31–Ser44 shows a compositional bias: basic and acidic residues. Positions Lys43 to Thr55 are required for binding PPP1CC. Ser44 is modified (phosphoserine; by ATM). Thr73 is subject to Phosphothreonine; by GSK3. Phosphoserine occurs at positions 87 and 89. Thr96 and Thr116 each carry phosphothreonine. The interval Leu104 to Met142 is disordered. Residues Ser110–Glu120 are compositionally biased toward basic and acidic residues. Phosphoserine is present on residues Ser121, Ser122, and Ser130. The segment covering Ser121 to Ser130 has biased composition (acidic residues). Basic and acidic residues predominate over residues Pro131–Met142. Residues His147–Glu150 form a required for binding PPP1CC catalytic center, displacing metal ions and inhibition of PPP1CC catalytic activity region. Positions Lys163–Ser205 are disordered. Residues Asp167–Asp179 are compositionally biased toward acidic residues.

This sequence belongs to the protein phosphatase inhibitor 2 family. As to quaternary structure, heterodimer with PP1. Post-translationally, phosphorylation on Ser-44 by ATM activates PP1 by dissociating the PP1-PPP1R2 complex. Phosphorylation on Thr-73 by GSK3 activates PP1 by dissociating the PP1-PPP1R2 complex. As to expression, central nervous system.

In terms of biological role, inhibitor of protein-phosphatase 1. This is Protein phosphatase inhibitor 2 (Ppp1r2) from Rattus norvegicus (Rat).